The primary structure comprises 856 residues: DNA mismatch repair protein MutS (856 aa).

617-624 (GPNMGGKS) contacts ATP.

The protein belongs to the DNA mismatch repair MutS family.

Its function is as follows. This protein is involved in the repair of mismatches in DNA. It is possible that it carries out the mismatch recognition step. This protein has a weak ATPase activity. The polypeptide is DNA mismatch repair protein MutS (Psychromonas ingrahamii (strain DSM 17664 / CCUG 51855 / 37)).